Reading from the N-terminus, the 158-residue chain is Cyclic pyranopterin monophosphate synthase (158 aa).

Substrate is bound by residues 75–77 (LCH) and 113–114 (ME). D128 is an active-site residue.

It belongs to the MoaC family. As to quaternary structure, homohexamer; trimer of dimers.

The catalysed reaction is (8S)-3',8-cyclo-7,8-dihydroguanosine 5'-triphosphate = cyclic pyranopterin phosphate + diphosphate. Its pathway is cofactor biosynthesis; molybdopterin biosynthesis. In terms of biological role, catalyzes the conversion of (8S)-3',8-cyclo-7,8-dihydroguanosine 5'-triphosphate to cyclic pyranopterin monophosphate (cPMP). This chain is Cyclic pyranopterin monophosphate synthase, found in Actinobacillus succinogenes (strain ATCC 55618 / DSM 22257 / CCUG 43843 / 130Z).